Here is a 203-residue protein sequence, read N- to C-terminus: GTP-binding protein YPTM2 (203 aa).

Residues 15–23, 33–40, 63–67, 121–124, and 151–153 contribute to the GTP site; these read GDSGVGKSC, YLDSYIST, DTAGQ, NKSD, and SAK. The short motif at 37–45 is the Effector region element; the sequence is YISTIGVDF. 2 S-geranylgeranyl cysteine lipidation sites follow: Cys-200 and Cys-201.

This sequence belongs to the small GTPase superfamily. Rab family. As to expression, its expression is weak in stems, higher in roots, leaves and coleoptiles, but highest in flowers.

It localises to the cell membrane. Protein transport. Probably involved in vesicular traffic. The polypeptide is GTP-binding protein YPTM2 (YPTM2) (Zea mays (Maize)).